The following is a 198-amino-acid chain: DnaJ homolog subfamily C member 5 (198 aa).

S8, S10, S12, and S15 each carry phosphoserine. Residues 13-82 (GESLYHVLGL…RNIYDKYGSL (70 aa)) form the J domain. Position 17 is a phosphotyrosine (Y17). An N6-acetyllysine modification is found at K56. Phosphoserine is present on S151.

Homodimer. Interacts with the chaperone complex consisting of HSC70 and SGTA. Interacts with ZDHHC13 (via ANK repeats). Interacts with ZDHHC17 (via ANK repeats). Interacts with SYT1, SYT5 and SYT7, and with SYT9, forming a complex with SNAP25. The interaction with SYT9 is stimulated tenfold in presence of calcium. Post-translationally, formation of the chaperone complex DNAJC5/HSC70 is not regulated by phosphorylation. Ser-10 phosphorylation induces an order-to-disorder transition triggering the interaction with Lys-58. This conformational switch modulates DNAJC5's cellular functions by reducing binding to syntaxin and synaptogamin without altering HSC70 interactions. Palmitoylated. Could be palmitoylated by DHHC3, DHHC7, DHHC15 and DHHC17. Palmitoylation occurs probably in the cysteine-rich domain and regulates DNAJC5 membrane attachment.

It is found in the cytoplasm. Its subcellular location is the cytosol. The protein localises to the membrane. The protein resides in the cytoplasmic vesicle. It localises to the secretory vesicle. It is found in the chromaffin granule membrane. Its subcellular location is the melanosome. The protein localises to the cell membrane. Its function is as follows. Acts as a co-chaperone for the SNARE protein SNAP-25. Involved in the calcium-mediated control of a late stage of exocytosis. Acts as a general chaperone in regulated exocytosis. May have an important role in presynaptic function. May be involved in calcium-dependent neurotransmitter release at nerve endings. This is DnaJ homolog subfamily C member 5 from Mus musculus (Mouse).